Consider the following 365-residue polypeptide: Protein-glutamate methylesterase/protein-glutamine glutaminase 1 (365 aa).

The Response regulatory domain occupies 4–121; it reads KVLVVDDSQF…SRDSVVLKKR (118 aa). Asp-55 bears the 4-aspartylphosphate mark. Residues 138–173 form a disordered region; the sequence is AARSTTQPSGVRPSALGANLSSSRSPRPASSAPSAP. Over residues 158-172 the composition is skewed to low complexity; sequence SSSRSPRPASSAPSA. The 184-residue stretch at 182–365 folds into the CheB-type methylesterase domain; that stretch reads KLVAIGASTG…QVWQRLVSDV (184 aa). Catalysis depends on residues Ser-189, His-216, and Asp-310.

Belongs to the CheB family. Post-translationally, phosphorylated by CheA. Phosphorylation of the N-terminal regulatory domain activates the methylesterase activity.

It localises to the cytoplasm. The enzyme catalyses [protein]-L-glutamate 5-O-methyl ester + H2O = L-glutamyl-[protein] + methanol + H(+). It carries out the reaction L-glutaminyl-[protein] + H2O = L-glutamyl-[protein] + NH4(+). Its function is as follows. Involved in chemotaxis. Part of a chemotaxis signal transduction system that modulates chemotaxis in response to various stimuli. Catalyzes the demethylation of specific methylglutamate residues introduced into the chemoreceptors (methyl-accepting chemotaxis proteins or MCP) by CheR. Also mediates the irreversible deamidation of specific glutamine residues to glutamic acid. This chain is Protein-glutamate methylesterase/protein-glutamine glutaminase 1, found in Saccharophagus degradans (strain 2-40 / ATCC 43961 / DSM 17024).